We begin with the raw amino-acid sequence, 339 residues long: Serine racemase (339 aa).

Positions 43 and 63 each coordinate ATP. Lysine 68 acts as the Proton acceptor in catalysis. Lysine 68 is subject to N6-(pyridoxal phosphate)lysine. Residue threonine 90 participates in Ca(2+) binding. Residue serine 93 is the Proton acceptor of the active site. Position 95 (asparagine 95) interacts with pyridoxal 5'-phosphate. Cysteine 122 is subject to S-nitrosocysteine. Residue tyrosine 130 coordinates ATP. Aspartate 187 is a Mg(2+) binding site. Pyridoxal 5'-phosphate is bound by residues glycine 195, glycine 196, and glycine 197. Residues glutamate 219, alanine 223, and aspartate 225 each contribute to the Ca(2+) site. Positions 219, 223, and 225 each coordinate Mg(2+). The Mn(2+) site is built by glutamate 219, alanine 223, and aspartate 225. Lysine 287 provides a ligand contact to ATP. Serine 323 serves as a coordination point for pyridoxal 5'-phosphate. An ATP-binding site is contributed by asparagine 326.

It belongs to the serine/threonine dehydratase family. It depends on Mg(2+) as a cofactor. The cofactor is Mn(2+). Ca(2+) is required as a cofactor. Requires pyridoxal 5'-phosphate as cofactor.

It catalyses the reaction L-serine = D-serine. It carries out the reaction L-serine = pyruvate + NH4(+). The catalysed reaction is D-serine = pyruvate + NH4(+). Catalyzes the synthesis of D-serine from L-serine. Has dehydratase activity towards both L-serine and D-serine. In Oryza sativa subsp. indica (Rice), this protein is Serine racemase.